Consider the following 126-residue polypeptide: Large ribosomal subunit protein bL17 (126 aa).

It belongs to the bacterial ribosomal protein bL17 family. Part of the 50S ribosomal subunit. Contacts protein L32.

This is Large ribosomal subunit protein bL17 from Aliivibrio salmonicida (strain LFI1238) (Vibrio salmonicida (strain LFI1238)).